The sequence spans 915 residues: Nitrate reductase [NADH] (915 aa).

The segment at 1 to 102 (MAASVEPRQP…PRDEGTADAW (102 aa)) is disordered. Over residues 16–26 (APATAPTARAP) the composition is skewed to low complexity. Positions 57-71 (AEEEEDDDDEDDEGH) are enriched in acidic residues. Basic and acidic residues predominate over residues 88-97 (PSTRDPRDEG). Position 189 (Cys-189) interacts with Mo-molybdopterin. A Cytochrome b5 heme-binding domain is found at 538–613 (DKQFTMSEVR…LDTYRIGELI (76 aa)). The heme site is built by His-573 and His-596. Residues 654–767 (REKVPCRLVD…KGPLGHVEYT (114 aa)) enclose the FAD-binding FR-type domain. FAD-binding positions include 706–709 (RAYT), 723–727 (LVKVY), Phe-728, Phe-735, 740–742 (LMT), Ser-791, and Thr-794.

This sequence belongs to the nitrate reductase family. As to quaternary structure, homodimer. The cofactor is FAD. Requires heme as cofactor. It depends on Mo-molybdopterin as a cofactor.

It catalyses the reaction nitrite + NAD(+) + H2O = nitrate + NADH + H(+). Nitrate reductase is a key enzyme involved in the first step of nitrate assimilation in plants, fungi and bacteria. This Hordeum vulgare (Barley) protein is Nitrate reductase [NADH].